The sequence spans 451 residues: Cyclin-dependent kinase 18 (451 aa).

Positions arginine 39–asparagine 61 are disordered. Position 51 is a phosphoserine (serine 51). The span at proline 52 to asparagine 61 shows a compositional bias: polar residues. Phosphoserine occurs at positions 66 and 109. The Protein kinase domain maps to tyrosine 121 to phenylalanine 402. Residues leucine 127–valine 135 and lysine 150 contribute to the ATP site. Aspartate 242 acts as the Proton acceptor in catalysis. Phosphoserine is present on residues serine 417 and serine 420.

It belongs to the protein kinase superfamily. CMGC Ser/Thr protein kinase family. CDC2/CDKX subfamily. In brain, kidney, intestine and at a much lower level, in fetal tissues.

The enzyme catalyses L-seryl-[protein] + ATP = O-phospho-L-seryl-[protein] + ADP + H(+). It carries out the reaction L-threonyl-[protein] + ATP = O-phospho-L-threonyl-[protein] + ADP + H(+). May play a role in signal transduction cascades in terminally differentiated cells. This Rattus norvegicus (Rat) protein is Cyclin-dependent kinase 18 (Cdk18).